A 246-amino-acid chain; its full sequence is Probable transcriptional regulatory protein COSY_0365 (246 aa).

It belongs to the TACO1 family.

The protein resides in the cytoplasm. The polypeptide is Probable transcriptional regulatory protein COSY_0365 (Vesicomyosocius okutanii subsp. Calyptogena okutanii (strain HA)).